A 114-amino-acid chain; its full sequence is uncharacterized protein (114 aa).

This is an uncharacterized protein from Archaeoglobus fulgidus (strain ATCC 49558 / DSM 4304 / JCM 9628 / NBRC 100126 / VC-16).